Here is a 558-residue protein sequence, read N- to C-terminus: Potassium-transporting ATPase potassium-binding subunit (558 aa).

12 helical membrane-spanning segments follow: residues 2 to 22 (LQGFVQIALILAILVATAPLL), 66 to 86 (VSAALISNLVMGVFVFLILMF), 135 to 155 (ALGFLMFTSAATGIAVAIAFI), 177 to 197 (ILLPISLVGAILLLVAGVPET), 253 to 273 (LLETVIMMVIPAGLIITYGIM), 280 to 300 (GWLIFWMVFILYGILIAIAAV), 327 to 347 (FGWVLTALWAVSTTGTMCGAV), 354 to 374 (LMPPGGFVTLSDLFLQIIWGG), 378 to 398 (GTAYLFVFLILTVFLTGLMVG), 413 to 433 (IVLASLILLIHPIAILIPTAI), 482 to 502 (LSASFSLIAGRYVPIVALIFL), and 528 to 548 (GITAGAIIILGALTFLPILVL).

Belongs to the KdpA family. The system is composed of three essential subunits: KdpA, KdpB and KdpC.

The protein resides in the cell inner membrane. Its function is as follows. Part of the high-affinity ATP-driven potassium transport (or Kdp) system, which catalyzes the hydrolysis of ATP coupled with the electrogenic transport of potassium into the cytoplasm. This subunit binds the periplasmic potassium ions and delivers the ions to the membrane domain of KdpB through an intramembrane tunnel. The sequence is that of Potassium-transporting ATPase potassium-binding subunit from Synechocystis sp. (strain ATCC 27184 / PCC 6803 / Kazusa).